A 494-amino-acid chain; its full sequence is Glutamyl-tRNA(Gln) amidotransferase subunit A (494 aa).

Residues lysine 80 and serine 160 each act as charge relay system in the active site. The tract at residues 140–168 is disordered; it reads GNVISPWRRPGDTAPLAPGGSSGGSSSAV. The Acyl-ester intermediate role is filled by serine 184.

The protein belongs to the amidase family. GatA subfamily. As to quaternary structure, heterotrimer of A, B and C subunits.

It carries out the reaction L-glutamyl-tRNA(Gln) + L-glutamine + ATP + H2O = L-glutaminyl-tRNA(Gln) + L-glutamate + ADP + phosphate + H(+). In terms of biological role, allows the formation of correctly charged Gln-tRNA(Gln) through the transamidation of misacylated Glu-tRNA(Gln) in organisms which lack glutaminyl-tRNA synthetase. The reaction takes place in the presence of glutamine and ATP through an activated gamma-phospho-Glu-tRNA(Gln). This Novosphingobium aromaticivorans (strain ATCC 700278 / DSM 12444 / CCUG 56034 / CIP 105152 / NBRC 16084 / F199) protein is Glutamyl-tRNA(Gln) amidotransferase subunit A.